The following is a 398-amino-acid chain: Tryptophan synthase beta chain (398 aa).

K88 carries the post-translational modification N6-(pyridoxal phosphate)lysine.

The protein belongs to the TrpB family. As to quaternary structure, tetramer of two alpha and two beta chains. Requires pyridoxal 5'-phosphate as cofactor.

It catalyses the reaction (1S,2R)-1-C-(indol-3-yl)glycerol 3-phosphate + L-serine = D-glyceraldehyde 3-phosphate + L-tryptophan + H2O. The protein operates within amino-acid biosynthesis; L-tryptophan biosynthesis; L-tryptophan from chorismate: step 5/5. Its function is as follows. The beta subunit is responsible for the synthesis of L-tryptophan from indole and L-serine. The chain is Tryptophan synthase beta chain from Mannheimia succiniciproducens (strain KCTC 0769BP / MBEL55E).